We begin with the raw amino-acid sequence, 238 residues long: Ribosomal RNA small subunit methyltransferase G (238 aa).

S-adenosyl-L-methionine is bound by residues Gly-77, Phe-82, 128-129, and Arg-147; that span reads AE. Positions 219 to 238 are disordered; sequence KKTPARYPRKPGTPNKQPIQ.

It belongs to the methyltransferase superfamily. RNA methyltransferase RsmG family.

The protein resides in the cytoplasm. In terms of biological role, specifically methylates the N7 position of guanine in position 535 of 16S rRNA. The chain is Ribosomal RNA small subunit methyltransferase G from Geobacillus thermodenitrificans (strain NG80-2).